Reading from the N-terminus, the 81-residue chain is RNA-binding protein Hfq (81 aa).

Residues 10-69 enclose the Sm domain; sequence DPFLNTLRKEHIPVSIYLVNGIKLQGHIDSFDQYVVLLKNTVTQMVYKHAISTVVPARAV.

This sequence belongs to the Hfq family. As to quaternary structure, homohexamer.

Its function is as follows. RNA chaperone that binds small regulatory RNA (sRNAs) and mRNAs to facilitate mRNA translational regulation in response to envelope stress, environmental stress and changes in metabolite concentrations. Also binds with high specificity to tRNAs. This chain is RNA-binding protein Hfq, found in Nitrosospira multiformis (strain ATCC 25196 / NCIMB 11849 / C 71).